Here is a 1135-residue protein sequence, read N- to C-terminus: Vinculin (1135 aa).

Residues 2–835 (PVFHTRTIES…GAVAKVREAF (834 aa)) are N-terminal globular head. At Tyr-100 the chain carries Phosphotyrosine. The tract at residues 168–208 (MTKMAKMIDERQQELTHQEHRVMLVNSMNTVKELLPVLISA) is talin-interaction. 3 tandem repeats follow at residues 259–369 (ASKD…KVEN), 370–479 (AARK…KTNR), and 480–589 (AVAN…RMQE). Residues 259–589 (ASKDTEAMKR…LKDLKARMQE (331 aa)) form a 3 X 112 AA tandem repeats region. Tyr-537 and Tyr-822 each carry phosphotyrosine. A linker (Pro-rich) region spans residues 836 to 878 (QPQEPDFPPPPPDLEHLHLTDELAPPKPPLPEGEVPPPRPPPP). A disordered region spans residues 837–888 (PQEPDFPPPPPDLEHLHLTDELAPPKPPLPEGEVPPPRPPPPEEKDEEFPEQ). A compositionally biased stretch (pro residues) spans 860 to 876 (PPKPPLPEGEVPPPRPP). The tract at residues 879 to 1135 (EEKDEEFPEQ…RWVRKTPWYQ (257 aa)) is C-terminal tail. Facilitates phospholipid membrane insertion stretches follow at residues 1004–1047 (RLVR…KRIR) and 1121–1135 (AGFT…PWYQ). Position 1134 is a phosphotyrosine; by SRC-type Tyr-kinases (Tyr-1134).

The protein belongs to the vinculin/alpha-catenin family. As to quaternary structure, exhibits self-association properties. Interacts with APBB1IP, NRAP and TLN1. Interacts with CTNNB1 and this interaction is necessary for its localization to the cell-cell junctions and for its function in regulating cell surface expression of E-cadherin. Phosphorylated; on serines, threonines and tyrosines. Phosphorylation on Tyr-1134 in activated platelets affects head-tail interactions and cell spreading but has no effect on actin binding nor on localization to focal adhesion plaques. In terms of processing, acetylated; mainly by myristic acid but also by a small amount of palmitic acid. Isoform Metavinculin is muscle-specific.

It is found in the cell membrane. Its subcellular location is the cell junction. The protein localises to the adherens junction. The protein resides in the focal adhesion. It localises to the cytoplasm. It is found in the cytoskeleton. Its subcellular location is the sarcolemma. The protein localises to the cell projection. The protein resides in the podosome. Functionally, actin filament (F-actin)-binding protein involved in cell-matrix adhesion and cell-cell adhesion. Regulates cell-surface E-cadherin expression and potentiates mechanosensing by the E-cadherin complex. May also play important roles in cell morphology and locomotion. This is Vinculin (VCL) from Gallus gallus (Chicken).